The following is an 88-amino-acid chain: Small ribosomal subunit protein uS12 (88 aa).

The tract at residues R1–G24 is disordered. D81 is modified (3-methylthioaspartic acid).

The protein belongs to the universal ribosomal protein uS12 family. As to quaternary structure, part of the 30S ribosomal subunit. Contacts proteins S8 and S17. May interact with IF1 in the 30S initiation complex.

Functionally, with S4 and S5 plays an important role in translational accuracy. Its function is as follows. Interacts with and stabilizes bases of the 16S rRNA that are involved in tRNA selection in the A site and with the mRNA backbone. Located at the interface of the 30S and 50S subunits, it traverses the body of the 30S subunit contacting proteins on the other side and probably holding the rRNA structure together. The combined cluster of proteins S8, S12 and S17 appears to hold together the shoulder and platform of the 30S subunit. This chain is Small ribosomal subunit protein uS12 (rpsL), found in Mycobacterium szulgai.